The primary structure comprises 631 residues: Dolichyl-diphosphooligosaccharide--protein glycosyltransferase subunit 2 (631 aa).

The N-terminal stretch at 1 to 22 is a signal peptide; the sequence is MAPPGSSTVFLLALTIIASTWA. Topologically, residues 23 to 540 are lumenal; that stretch reads LTPTHYLTKH…REPEKRPPTV (518 aa). Residue N106 is glycosylated (N-linked (GlcNAc...) asparagine). A Glycyl lysine isopeptide (Lys-Gly) (interchain with G-Cter in ubiquitin) cross-link involves residue K154. Residues 541–561 form a helical membrane-spanning segment; sequence VSNTFTALILSPLLLLFALWI. Residues 562-571 lie on the Cytoplasmic side of the membrane; it reads RIGANVSNFT. A helical membrane pass occupies residues 572 to 592; sequence FAPSTIIFHLGHAAMLGLMYV. The Lumenal segment spans residues 593–596; the sequence is YWTQ. A helical transmembrane segment spans residues 597–617; that stretch reads LNMFQTLKYLAILGSVTFLAG. The Cytoplasmic portion of the chain corresponds to 618–631; sequence NRMLAQQAVKRTAH.

It belongs to the SWP1 family. As to quaternary structure, component of the oligosaccharyltransferase (OST) complex. OST exists in two different complex forms which contain common core subunits RPN1, RPN2, OST48, OST4, DAD1 and TMEM258, either STT3A or STT3B as catalytic subunits, and form-specific accessory subunits. STT3A complex assembly occurs through the formation of 3 subcomplexes. Subcomplex 1 contains RPN1 and TMEM258, subcomplex 2 contains the STT3A-specific subunits STT3A, DC2/OSTC, and KCP2 as well as the core subunit OST4, and subcomplex 3 contains RPN2, DAD1, and OST48. The STT3A complex can form stable complexes with the Sec61 complex or with both the Sec61 and TRAP complexes. Interacts with DDI2. Interacts with TMEM35A/NACHO. In terms of tissue distribution, expressed in all tissues tested.

Its subcellular location is the endoplasmic reticulum. The protein localises to the endoplasmic reticulum membrane. It participates in protein modification; protein glycosylation. Its function is as follows. Subunit of the oligosaccharyl transferase (OST) complex that catalyzes the initial transfer of a defined glycan (Glc(3)Man(9)GlcNAc(2) in eukaryotes) from the lipid carrier dolichol-pyrophosphate to an asparagine residue within an Asn-X-Ser/Thr consensus motif in nascent polypeptide chains, the first step in protein N-glycosylation. N-glycosylation occurs cotranslationally and the complex associates with the Sec61 complex at the channel-forming translocon complex that mediates protein translocation across the endoplasmic reticulum (ER). All subunits are required for a maximal enzyme activity. This is Dolichyl-diphosphooligosaccharide--protein glycosyltransferase subunit 2 from Homo sapiens (Human).